Consider the following 189-residue polypeptide: Mu-like prophage FluMu protein gp27 (189 aa).

To phage Mu protein gp27.

This is Mu-like prophage FluMu protein gp27 from Haemophilus influenzae (strain ATCC 51907 / DSM 11121 / KW20 / Rd).